The sequence spans 124 residues: Ribonuclease pancreatic (124 aa).

Positions 1–13 (KETAAAKFERQHM) are enriched in basic and acidic residues. The tract at residues 1 to 22 (KETAAAKFERQHMDSSTSAASS) is disordered. 2 residues coordinate substrate: Lys7 and Arg10. His12 acts as the Proton acceptor in catalysis. Intrachain disulfides connect Cys26-Cys84, Cys40-Cys95, Cys58-Cys110, and Cys65-Cys72. Asn34 carries an N-linked (GlcNAc...) asparagine glycan. Substrate contacts are provided by residues 41 to 45 (KPVNT), Lys66, and Arg85. His119 acts as the Proton donor in catalysis.

It belongs to the pancreatic ribonuclease family. In terms of assembly, monomer. Interacts with and forms tight 1:1 complexes with RNH1. Dimerization of two such complexes may occur. Interaction with RNH1 inhibits this protein. In terms of tissue distribution, pancreas.

It is found in the secreted. The enzyme catalyses an [RNA] containing cytidine + H2O = an [RNA]-3'-cytidine-3'-phosphate + a 5'-hydroxy-ribonucleotide-3'-[RNA].. It carries out the reaction an [RNA] containing uridine + H2O = an [RNA]-3'-uridine-3'-phosphate + a 5'-hydroxy-ribonucleotide-3'-[RNA].. Functionally, endonuclease that catalyzes the cleavage of RNA on the 3' side of pyrimidine nucleotides. Acts on single-stranded and double-stranded RNA. The polypeptide is Ribonuclease pancreatic (RNASE1) (Bison bison (American bison)).